The following is a 182-amino-acid chain: Ribulose bisphosphate carboxylase small subunit, chloroplastic 4 (182 aa).

A chloroplast-targeting transit peptide spans 1–41 (MSAAMMNKSVVLSKQCTKPAATPKVVTSKRSFASTVANKNR).

This sequence belongs to the RuBisCO small chain family. In terms of assembly, heterohexadecamer of 8 large and 8 small subunits.

The protein resides in the plastid. It localises to the chloroplast. Its function is as follows. RuBisCO catalyzes two reactions: the carboxylation of D-ribulose 1,5-bisphosphate, the primary event in carbon dioxide fixation, as well as the oxidative fragmentation of the pentose substrate. Both reactions occur simultaneously and in competition at the same active site. Although the small subunit is not catalytic it is essential for maximal activity. In Acetabularia acetabulum (Mermaid's wine glass), this protein is Ribulose bisphosphate carboxylase small subunit, chloroplastic 4.